We begin with the raw amino-acid sequence, 719 residues long: Putative ankyrin repeat protein RBE_0319 (719 aa).

ANK repeat units lie at residues Val377–Ser406, Thr408–Glu438, Asn442–Lys472, Tyr476–Gln506, Tyr510–Glu540, Leu544–Gln572, Asp576–Glu605, His609–Glu639, and Gln642–Lys672.

This is Putative ankyrin repeat protein RBE_0319 from Rickettsia bellii (strain RML369-C).